The sequence spans 247 residues: MSDPLILIPARLAATRLPSKPLADIAGVPMIVHVWRRAVEAGIGPVVVATDTDAVAEVIEAQGGLAVMTRPDHPSGSDRLAEALEIVDPDGNHDVVVNVQGDLPTIDPAIIAASVMPLADPQVDIATLCAVIHRPEEMDDPNVVKIIGHTVGPNRLRALAFTRARAPWGDGPLFHHIGLYAYRRKALARFVALPQGELEQREKLEQLRALEAGMRIDAMIVEDLPLGVDTPADLERARTLLAIRRLN.

Belongs to the KdsB family.

It is found in the cytoplasm. The enzyme catalyses 3-deoxy-alpha-D-manno-oct-2-ulosonate + CTP = CMP-3-deoxy-beta-D-manno-octulosonate + diphosphate. Its pathway is nucleotide-sugar biosynthesis; CMP-3-deoxy-D-manno-octulosonate biosynthesis; CMP-3-deoxy-D-manno-octulosonate from 3-deoxy-D-manno-octulosonate and CTP: step 1/1. The protein operates within bacterial outer membrane biogenesis; lipopolysaccharide biosynthesis. Activates KDO (a required 8-carbon sugar) for incorporation into bacterial lipopolysaccharide in Gram-negative bacteria. The polypeptide is 3-deoxy-manno-octulosonate cytidylyltransferase (Methylorubrum extorquens (strain PA1) (Methylobacterium extorquens)).